A 232-amino-acid polypeptide reads, in one-letter code: Phosphoribosylformylglycinamidine synthase subunit PurQ (232 aa).

Residues 2-232 (RIGVITFPGS…SVVRSTLVEA (231 aa)) form the Glutamine amidotransferase type-1 domain. The active-site Nucleophile is cysteine 85. Residues histidine 194 and glutamate 196 contribute to the active site.

As to quaternary structure, part of the FGAM synthase complex composed of 1 PurL, 1 PurQ and 2 PurS subunits.

Its subcellular location is the cytoplasm. It carries out the reaction N(2)-formyl-N(1)-(5-phospho-beta-D-ribosyl)glycinamide + L-glutamine + ATP + H2O = 2-formamido-N(1)-(5-O-phospho-beta-D-ribosyl)acetamidine + L-glutamate + ADP + phosphate + H(+). It catalyses the reaction L-glutamine + H2O = L-glutamate + NH4(+). It functions in the pathway purine metabolism; IMP biosynthesis via de novo pathway; 5-amino-1-(5-phospho-D-ribosyl)imidazole from N(2)-formyl-N(1)-(5-phospho-D-ribosyl)glycinamide: step 1/2. Part of the phosphoribosylformylglycinamidine synthase complex involved in the purines biosynthetic pathway. Catalyzes the ATP-dependent conversion of formylglycinamide ribonucleotide (FGAR) and glutamine to yield formylglycinamidine ribonucleotide (FGAM) and glutamate. The FGAM synthase complex is composed of three subunits. PurQ produces an ammonia molecule by converting glutamine to glutamate. PurL transfers the ammonia molecule to FGAR to form FGAM in an ATP-dependent manner. PurS interacts with PurQ and PurL and is thought to assist in the transfer of the ammonia molecule from PurQ to PurL. This Leifsonia xyli subsp. xyli (strain CTCB07) protein is Phosphoribosylformylglycinamidine synthase subunit PurQ.